Reading from the N-terminus, the 555-residue chain is Urocanate hydratase (555 aa).

NAD(+) is bound by residues 51–52 (GG), Gln129, 175–177 (GMG), Glu195, 262–266 (QTSAH), 272–273 (YL), and Tyr321. Cys409 is a catalytic residue. Gly491 contacts NAD(+).

Belongs to the urocanase family. NAD(+) serves as cofactor.

It is found in the cytoplasm. It carries out the reaction 4-imidazolone-5-propanoate = trans-urocanate + H2O. Its pathway is amino-acid degradation; L-histidine degradation into L-glutamate; N-formimidoyl-L-glutamate from L-histidine: step 2/3. Catalyzes the conversion of urocanate to 4-imidazolone-5-propionate. The protein is Urocanate hydratase of Xanthomonas axonopodis pv. citri (strain 306).